Reading from the N-terminus, the 380-residue chain is Glucose-1-phosphate adenylyltransferase (380 aa).

Alpha-D-glucose 1-phosphate contacts are provided by residues Gly-164, 179–180, and Ser-190; that span reads EK.

Belongs to the bacterial/plant glucose-1-phosphate adenylyltransferase family. Homotetramer.

The catalysed reaction is alpha-D-glucose 1-phosphate + ATP + H(+) = ADP-alpha-D-glucose + diphosphate. It participates in glycan biosynthesis; glycogen biosynthesis. In terms of biological role, involved in the biosynthesis of ADP-glucose, a building block required for the elongation reactions to produce glycogen. Catalyzes the reaction between ATP and alpha-D-glucose 1-phosphate (G1P) to produce pyrophosphate and ADP-Glc. The sequence is that of Glucose-1-phosphate adenylyltransferase from Streptococcus pneumoniae (strain 70585).